Here is a 970-residue protein sequence, read N- to C-terminus: Anaphase-promoting complex subunit 3 (970 aa).

TPR repeat units follow at residues 35–68 (EDNL…TMIK), 74–107 (ALSN…NNNN), 142–175 (NNNS…NSIS), and 185–218 (GSVY…YPFL). The disordered stretch occupies residues 106–149 (NNNNNNNNNNNNNNNNNNNNNNNKDKCNNSNKNNDSNNNSNSNN). Residues 274 to 300 (KVNNNNNNNNNNNNNINNNNSSNKNNE) form a disordered region. 2 TPR repeats span residues 319-353 (IKPN…TPIN) and 361-394 (TNQQ…TPQT). Disordered regions lie at residues 358–379 (IQQT…PSQQ), 414–525 (PIPM…TTTT), and 556–582 (SSLS…HNKS). Residues 359-379 (QQTNQQQQQQQQQQPQQPSQQ) show a composition bias toward low complexity. Polar residues predominate over residues 424-443 (SKGSQHPPSSNSQTPYTPST). Over residues 446-460 (VHHHQKQQPHQHKKS) the composition is skewed to basic residues. Low complexity predominate over residues 500–525 (TSSTSKQQQQQQQTKQQTTTTTTTTT). 9 TPR repeats span residues 546–580 (TEEF…HHHN), 636–671 (LELF…QYRT), 672–705 (GWVL…EPYR), 740–773 (PYSW…DPDM), 775–807 (YAYT…DPRH), 808–841 (YNAF…NESS), 843–876 (VLCC…QPKN), 878–910 (FAKF…EPKE), and 911–944 (TPIY…DPKN). Basic residues predominate over residues 570–580 (YQQHHHLHHHN).

The protein belongs to the APC3/CDC27 family. As to quaternary structure, the APC/C is composed of at least 13 subunits that stay tightly associated throughout the cell cycle: anapc1, anapc2, anapc3, anapc4, anapc5, anapc6, anapc7, anapc8, anapc10, anapc11, cdc20, cdc26 and cdh1.

It localises to the nucleus. The protein operates within protein modification; protein ubiquitination. Functionally, component of the anaphase promoting complex/cyclosome (APC/C), a cell cycle-regulated E3 ubiquitin-protein ligase complex that controls progression through mitosis and the G1 phase of the cell cycle. The polypeptide is Anaphase-promoting complex subunit 3 (anapc3) (Dictyostelium discoideum (Social amoeba)).